A 660-amino-acid polypeptide reads, in one-letter code: Threonine--tRNA ligase (660 aa).

The TGS domain occupies 1-49; the sequence is MPDSIVHVKKGQRFLDVIKDKNVVAVKIDSVLHDLRDVAERDVDAIPVS. Positions 225–554 are catalytic; sequence DHRRIIAEMD…LLEHYAGKLP (330 aa). Zn(2+) contacts are provided by Cys-318, His-369, and His-531.

Belongs to the class-II aminoacyl-tRNA synthetase family. As to quaternary structure, homodimer. Requires Zn(2+) as cofactor.

Its subcellular location is the cytoplasm. The enzyme catalyses tRNA(Thr) + L-threonine + ATP = L-threonyl-tRNA(Thr) + AMP + diphosphate + H(+). Catalyzes the attachment of threonine to tRNA(Thr) in a two-step reaction: L-threonine is first activated by ATP to form Thr-AMP and then transferred to the acceptor end of tRNA(Thr). The chain is Threonine--tRNA ligase from Thermoplasma acidophilum (strain ATCC 25905 / DSM 1728 / JCM 9062 / NBRC 15155 / AMRC-C165).